The following is a 112-amino-acid chain: Large ribosomal subunit protein bL17 (112 aa).

Belongs to the bacterial ribosomal protein bL17 family. As to quaternary structure, part of the 50S ribosomal subunit. Contacts protein L32.

The chain is Large ribosomal subunit protein bL17 from Caldanaerobacter subterraneus subsp. tengcongensis (strain DSM 15242 / JCM 11007 / NBRC 100824 / MB4) (Thermoanaerobacter tengcongensis).